We begin with the raw amino-acid sequence, 663 residues long: UvrABC system protein B (663 aa).

One can recognise a Helicase ATP-binding domain in the interval 31-271 (DNIEGGEKAQ…EQSISKIQAE (241 aa)). 44-51 (GATGTGKT) serves as a coordination point for ATP. Positions 97 to 120 (YYDYYQPEAYVPSSDTYIEKDSSV) match the Beta-hairpin motif. A Helicase C-terminal domain is found at 435–601 (QMDDLLGEIN…TIKKDIRDLI (167 aa)). The region spanning 627 to 662 (QEAIKQLQKNMQEAAELLDFELAAQLRDLILELKAM) is the UVR domain.

It belongs to the UvrB family. In terms of assembly, forms a heterotetramer with UvrA during the search for lesions. Interacts with UvrC in an incision complex.

Its subcellular location is the cytoplasm. In terms of biological role, the UvrABC repair system catalyzes the recognition and processing of DNA lesions. A damage recognition complex composed of 2 UvrA and 2 UvrB subunits scans DNA for abnormalities. Upon binding of the UvrA(2)B(2) complex to a putative damaged site, the DNA wraps around one UvrB monomer. DNA wrap is dependent on ATP binding by UvrB and probably causes local melting of the DNA helix, facilitating insertion of UvrB beta-hairpin between the DNA strands. Then UvrB probes one DNA strand for the presence of a lesion. If a lesion is found the UvrA subunits dissociate and the UvrB-DNA preincision complex is formed. This complex is subsequently bound by UvrC and the second UvrB is released. If no lesion is found, the DNA wraps around the other UvrB subunit that will check the other stand for damage. This is UvrABC system protein B from Streptococcus equi subsp. zooepidemicus (strain H70).